We begin with the raw amino-acid sequence, 742 residues long: Phosphoribosylformylglycinamidine synthase subunit PurL (742 aa).

His-50 is a catalytic residue. ATP-binding residues include Tyr-53 and Lys-92. Residue Glu-94 coordinates Mg(2+). Substrate contacts are provided by residues 95–98 (SHNH) and Arg-117. His-96 acts as the Proton acceptor in catalysis. A Mg(2+)-binding site is contributed by Asp-118. Gln-241 provides a ligand contact to substrate. Asp-269 lines the Mg(2+) pocket. 313–315 (ESQ) is a substrate binding site. The ATP site is built by Asp-494 and Gly-531. Asn-532 is a Mg(2+) binding site. Residue Ser-534 coordinates substrate.

Belongs to the FGAMS family. Monomer. Part of the FGAM synthase complex composed of 1 PurL, 1 PurQ and 2 PurS subunits.

The protein localises to the cytoplasm. The catalysed reaction is N(2)-formyl-N(1)-(5-phospho-beta-D-ribosyl)glycinamide + L-glutamine + ATP + H2O = 2-formamido-N(1)-(5-O-phospho-beta-D-ribosyl)acetamidine + L-glutamate + ADP + phosphate + H(+). It functions in the pathway purine metabolism; IMP biosynthesis via de novo pathway; 5-amino-1-(5-phospho-D-ribosyl)imidazole from N(2)-formyl-N(1)-(5-phospho-D-ribosyl)glycinamide: step 1/2. Part of the phosphoribosylformylglycinamidine synthase complex involved in the purines biosynthetic pathway. Catalyzes the ATP-dependent conversion of formylglycinamide ribonucleotide (FGAR) and glutamine to yield formylglycinamidine ribonucleotide (FGAM) and glutamate. The FGAM synthase complex is composed of three subunits. PurQ produces an ammonia molecule by converting glutamine to glutamate. PurL transfers the ammonia molecule to FGAR to form FGAM in an ATP-dependent manner. PurS interacts with PurQ and PurL and is thought to assist in the transfer of the ammonia molecule from PurQ to PurL. This Sinorhizobium fredii (strain NBRC 101917 / NGR234) protein is Phosphoribosylformylglycinamidine synthase subunit PurL.